The following is a 252-amino-acid chain: Transcriptional regulatory protein HptR (252 aa).

In terms of domain architecture, Response regulatory spans 3-118 (KVVICDDERI…QLEVILGRLV (116 aa)). At Asp55 the chain carries 4-aspartylphosphate. Positions 153 to 250 (NQIVDQIKQS…QMSPSDYCKQ (98 aa)) constitute an HTH araC/xylS-type domain. 2 consecutive DNA-binding regions (H-T-H motif) follow at residues 170–191 (SDLI…KDHV) and 217–240 (HYEI…KKYL).

Post-translationally, phosphorylated by HptS.

The protein resides in the cytoplasm. Member of the two-component regulatory system HptS/HptR that regulates genes involved in hexose phosphate transport system in response to changes in extracellular phosphate sources. Activates uhpT expression to facilitate glucose-6-phosphate/G6P utilization by directly binding to its promoter. Antagonizes CcpA-dependent transcription of a subset of CcpA-regulated genes involved in antibiotic susceptibility. The protein is Transcriptional regulatory protein HptR (hptR) of Staphylococcus aureus (strain MRSA252).